Reading from the N-terminus, the 88-residue chain is Large ribosomal subunit protein bL27 (88 aa).

A disordered region spans residues 1–23; it reads MAHKKAGGSSRNGRDSAGRRLGV.

It belongs to the bacterial ribosomal protein bL27 family.

The polypeptide is Large ribosomal subunit protein bL27 (Methylorubrum extorquens (strain CM4 / NCIMB 13688) (Methylobacterium extorquens)).